A 244-amino-acid polypeptide reads, in one-letter code: MSMLCYTLIIAFLIGIWAAPKSEDNVSLGSPATPDLSDTSCAKTHEALKTSRNTDQHYPAPKKAEDQEFGSAANIIVDPKLFQKRRFQSPRVLFSTQPPPLSRDEQSVEFLDNADSLNRNIRAKRATHPVHNRGEFSVCDSVSVWVANKTTATDIRGNVVTVMVDVKLNNNVYRQYFFETKCKNPSPVSSGCRGIDAKHWNSYCTTTDTFVRALTMEGNQASWRFIRIDTACVCVISRKNDNFG.

Positions 1–18 (MSMLCYTLIIAFLIGIWA) are cleaved as a signal peptide. The propeptide occupies 19–125 (APKSEDNVSL…SLNRNIRAKR (107 aa)). 3 disulfide bridges follow: Cys-139/Cys-204, Cys-182/Cys-232, and Cys-192/Cys-234. N-linked (GlcNAc...) asparagine glycosylation occurs at Asn-148.

The protein belongs to the NGF-beta family. In terms of assembly, homodimer; non-covalently linked. N-glycosylated. Expressed by the venom gland.

The protein localises to the secreted. In terms of biological role, nerve growth factor is important for the development and maintenance of the sympathetic and sensory nervous systems. It stimulates division and differentiation of sympathetic and embryonic sensory neurons as well as basal forebrain cholinergic neurons in the brain. Its relevance in the snake venom is not clear. However, it has been shown to inhibit metalloproteinase-dependent proteolysis of platelet glycoprotein Ib alpha, suggesting a metalloproteinase inhibition to prevent metalloprotease autodigestion and/or protection against prey proteases. Binds a lipid between the two protein chains in the homodimer. The lipid-bound form promotes histamine relase from mouse mast cells, contrary to the lipid-free form. It promotes neurite outgrowth in rat PC12 pheochromocytoma cells. In Macrovipera lebetinus (Levantine viper), this protein is Venom nerve growth factor.